The sequence spans 89 residues: Small ribosomal subunit protein uS15 (89 aa).

The protein belongs to the universal ribosomal protein uS15 family. As to quaternary structure, part of the 30S ribosomal subunit. Forms a bridge to the 50S subunit in the 70S ribosome, contacting the 23S rRNA.

Functionally, one of the primary rRNA binding proteins, it binds directly to 16S rRNA where it helps nucleate assembly of the platform of the 30S subunit by binding and bridging several RNA helices of the 16S rRNA. Its function is as follows. Forms an intersubunit bridge (bridge B4) with the 23S rRNA of the 50S subunit in the ribosome. The sequence is that of Small ribosomal subunit protein uS15 from Sinorhizobium medicae (strain WSM419) (Ensifer medicae).